The sequence spans 549 residues: Acetyl-coenzyme A transporter 1 (549 aa).

A compositionally biased stretch (basic and acidic residues) spans 1–12 (MSPTISHKDSSR). The disordered stretch occupies residues 1–46 (MSPTISHKDSSRQRRPGNFSHSLDMKSGPLPPGGWDDSHLDSAGRE). Residues 1–74 (MSPTISHKDS…PQSFRAELSS (74 aa)) are Cytoplasmic-facing. 2 positions are modified to phosphoserine: S22 and S42. Positions 36 to 46 (DDSHLDSAGRE) are enriched in basic and acidic residues. The helical transmembrane segment at 75–95 (ILLLLFLYVLQGIPLGLAGSI) threads the bilayer. The Extracellular segment spans residues 96–113 (PLILQSKNVSYTDQAFFS). N-linked (GlcNAc...) asparagine glycosylation occurs at N103. The helical transmembrane segment at 114–134 (FVFWPFSLKLLWAPLVDAVYV) threads the bilayer. The Cytoplasmic portion of the chain corresponds to 135–141 (KNFGRRK). A helical transmembrane segment spans residues 142–162 (SWLVPTQYILGLFMIYLSTQV). Topologically, residues 163–175 (DRLLGNTDDRTPD) are extracellular. A helical membrane pass occupies residues 176-196 (VIALTVAFFLFEFLAATQDIA). At 197–217 (VDGWALTMLSRENVGYASTCN) the chain is on the cytoplasmic side. The helical transmembrane segment at 218–238 (SVGQTAGYFLGNVLFLALESA) threads the bilayer. The Extracellular portion of the chain corresponds to 239 to 256 (DFCNKYLRFQPQPRGIVT). The chain crosses the membrane as a helical span at residues 257 to 277 (LSDFLFFWGTVFLITTTLVAL). Topologically, residues 278–299 (LKKENEVSVVKEETQGITDTYK) are cytoplasmic. A helical transmembrane segment spans residues 300–320 (LLFAIIKMPAVLTFCLLILTA). Residues 321–343 (KIGFSAADAVTGLKLVEEGVPKE) are Extracellular-facing. The helical transmembrane segment at 344-364 (HLALLAVPMVPLQIILPLIIS) threads the bilayer. Residues 365–378 (KYTAGPQPLNTFYK) are Cytoplasmic-facing. Residues 379–398 (AMPYRLLLGLEYALLVWWTP) form a helical membrane-spanning segment. Residues 399–404 (KVEHQG) lie on the Extracellular side of the membrane. A helical membrane pass occupies residues 405 to 425 (GFPIYYYIVVLLSYALHQVTV). The Cytoplasmic segment spans residues 426 to 508 (YSMYVSIMAF…LGGSCVTALD (83 aa)). A helical transmembrane segment spans residues 509-529 (GYYVESIICVFIGFGWWFFLG). Over 530–549 (PKFKKLQDEGSSSWKCKRNN) the chain is Extracellular.

This sequence belongs to the SLC33A transporter family. In terms of assembly, homodimerizes. In terms of tissue distribution, ubiquitous. Detected in heart, brain, placenta, lung, liver, skeletal muscle, kidney and pancreas. With strongest signals in pancreas.

It is found in the endoplasmic reticulum membrane. It catalyses the reaction acetyl-CoA(in) = acetyl-CoA(out). Functionally, acetyl-CoA transporter that mediates active acetyl-CoA import through the endoplasmic reticulum (ER) membrane into the ER lumen where specific ER-based acetyl-CoA:lysine acetyltransferases are responsible for the acetylation of ER-based protein substrates, such as BACE1. Necessary for O-acetylation of gangliosides. The chain is Acetyl-coenzyme A transporter 1 from Homo sapiens (Human).